We begin with the raw amino-acid sequence, 178 residues long: Gamma-crystallin M1 (178 aa).

2 consecutive Beta/gamma crystallin 'Greek key' domains span residues 2–40 (GKII…RVES) and 41–86 (GCFM…RMIP). The segment at 87–91 (PYRGS) is connecting peptide. 2 consecutive Beta/gamma crystallin 'Greek key' domains span residues 92–132 (YRMR…HVMD) and 133–175 (GHWL…RRIT).

The protein belongs to the beta/gamma-crystallin family. Monomer.

Crystallins are the dominant structural components of the vertebrate eye lens. The protein is Gamma-crystallin M1 of Cyprinus carpio (Common carp).